Here is an 847-residue protein sequence, read N- to C-terminus: MSVKLLERILRAGEGRTLKRLRNIAHTVNAIEDEYKGCTDGELRTFAFDLKVRHQNGESLDSILPEAFAMVREASSRTLGLRHFDVQIMGGAALHMGYIAEMFTGEGKTLVATLPAFLNSLSGNGVHIVTVNDYLAGYHSQQMGRVYKVLGLETGVILADQDPSTRAQQYRADITYGTNNEFGFDYLRDNMAWSCAERVQRGHNFVILDEVDSILIDEARTPLIISGSSSGEVSRWFVEFAGIARALTAGEDYDVDERKHTVGVLEPGIAKVEDLLGISNLYESVNTPLISFLNNSIKAKELFKRDRDYVVLDGEVMIVDEHTGRILSGRRYNEGLHQAIEAKEGVEIKAENQTLATVTLQNYFRLYKKISGMTGTAVTEASEFMSTYKLPVVSIPTNKPNIRKDHPDVVYKNEQIKFENLADHVRECYTRGQPVLIGTTSVEKSEYVSKLLSKRGVRHEVLNAKNHAKEARIVAEAGRLRAVTVATNMAGRGTDIILGGNPEVLTAVELRRKGLDPSKDPERYEQAWSSAFPKLHRRTREEAEKVIEAGGLMVIGTERHESRRIDNQLRGRSGRQGDPGESRFYLSLTDDLMRKFNPGAASALAARVPDDTAIESKLVSRAIRSAQAQVESLNAETRKNVLKYDDVLNRQRAAIYTDRSRILEGGDIADRVQAFLSDAIEEIINSHAVTAWDFDALWADLKTIYPVGISIEELTDEAGGMGRITPDFVMREILSDAKFAYEKRESEIGPESMRDLERKVVLSVIDRCWRDHLYEMEYLKEGIGLRAMAQRDPLVEYQKEGFDMFEAMMGRIREESIGYLFNIDAQVSSNSPSDARNRPIEHDDNAV.

ATP contacts are provided by residues Gln-87, 105–109 (GEGKT), and Asp-495. A disordered region spans residues 828-847 (SSNSPSDARNRPIEHDDNAV). The span at 835-847 (ARNRPIEHDDNAV) shows a compositional bias: basic and acidic residues.

The protein belongs to the SecA family. Monomer and homodimer. Part of the essential Sec protein translocation apparatus which comprises SecA, SecYEG and auxiliary proteins SecDF. Other proteins may also be involved.

The protein localises to the cell membrane. Its subcellular location is the cytoplasm. It catalyses the reaction ATP + H2O + cellular proteinSide 1 = ADP + phosphate + cellular proteinSide 2.. Part of the Sec protein translocase complex. Interacts with the SecYEG preprotein conducting channel. Has a central role in coupling the hydrolysis of ATP to the transfer of proteins into and across the cell membrane, serving as an ATP-driven molecular motor driving the stepwise translocation of polypeptide chains across the membrane. The polypeptide is Protein translocase subunit SecA (Tropheryma whipplei (strain TW08/27) (Whipple's bacillus)).